Reading from the N-terminus, the 345-residue chain is NADH-quinone oxidoreductase subunit H (345 aa).

8 consecutive transmembrane segments (helical) span residues 13–33 (VLIL…LLFL), 84–104 (FMLA…VIPF), 115–135 (VAIL…IMGG), 161–181 (LGLI…GGIV), 190–210 (FFSW…ISCL), 248–268 (YIAI…GWLS), 277–297 (VFWM…VKAI), and 309–329 (LGWK…AFAA).

It belongs to the complex I subunit 1 family. In terms of assembly, NDH-1 is composed of 14 different subunits. Subunits NuoA, H, J, K, L, M, N constitute the membrane sector of the complex.

The protein resides in the cell inner membrane. It catalyses the reaction a quinone + NADH + 5 H(+)(in) = a quinol + NAD(+) + 4 H(+)(out). Its function is as follows. NDH-1 shuttles electrons from NADH, via FMN and iron-sulfur (Fe-S) centers, to quinones in the respiratory chain. The immediate electron acceptor for the enzyme in this species is believed to be ubiquinone. Couples the redox reaction to proton translocation (for every two electrons transferred, four hydrogen ions are translocated across the cytoplasmic membrane), and thus conserves the redox energy in a proton gradient. This subunit may bind ubiquinone. The polypeptide is NADH-quinone oxidoreductase subunit H (Roseobacter denitrificans (strain ATCC 33942 / OCh 114) (Erythrobacter sp. (strain OCh 114))).